The following is a 114-amino-acid chain: T cell receptor alpha variable 3 (114 aa).

The first 20 residues, 1–20, serve as a signal peptide directing secretion; it reads MASAPISMLAMLFTLSGLRA. In terms of domain architecture, Ig-like spans 21-114; the sequence is QSVAQPEDQV…SALYFCAVRD (94 aa). An intrachain disulfide couples C42 to C110. N-linked (GlcNAc...) asparagine glycosylation is present at N87.

As to quaternary structure, alpha-beta TR is a heterodimer composed of an alpha and beta chain; disulfide-linked. The alpha-beta TR is associated with the transmembrane signaling CD3 coreceptor proteins to form the TR-CD3 (TcR or TCR). The assembly of alpha-beta TR heterodimers with CD3 occurs in the endoplasmic reticulum where a single alpha-beta TR heterodimer associates with one CD3D-CD3E heterodimer, one CD3G-CD3E heterodimer and one CD247 homodimer forming a stable octameric structure. CD3D-CD3E and CD3G-CD3E heterodimers preferentially associate with TR alpha and TR beta chains, respectively. The association of the CD247 homodimer is the last step of TcR assembly in the endoplasmic reticulum and is required for transport to the cell surface.

Its subcellular location is the cell membrane. Functionally, v region of the variable domain of T cell receptor (TR) alpha chain that participates in the antigen recognition. Alpha-beta T cell receptors are antigen specific receptors which are essential to the immune response and are present on the cell surface of T lymphocytes. Recognize peptide-major histocompatibility (MH) (pMH) complexes that are displayed by antigen presenting cells (APC), a prerequisite for efficient T cell adaptive immunity against pathogens. Binding of alpha-beta TR to pMH complex initiates TR-CD3 clustering on the cell surface and intracellular activation of LCK that phosphorylates the ITAM motifs of CD3G, CD3D, CD3E and CD247 enabling the recruitment of ZAP70. In turn ZAP70 phosphorylates LAT, which recruits numerous signaling molecules to form the LAT signalosome. The LAT signalosome propagates signal branching to three major signaling pathways, the calcium, the mitogen-activated protein kinase (MAPK) kinase and the nuclear factor NF-kappa-B (NF-kB) pathways, leading to the mobilization of transcription factors that are critical for gene expression and essential for T cell growth and differentiation. The T cell repertoire is generated in the thymus, by V-(D)-J rearrangement. This repertoire is then shaped by intrathymic selection events to generate a peripheral T cell pool of self-MH restricted, non-autoaggressive T cells. Post-thymic interaction of alpha-beta TR with the pMH complexes shapes TR structural and functional avidity. In Homo sapiens (Human), this protein is T cell receptor alpha variable 3.